A 600-amino-acid chain; its full sequence is Glutamine--fructose-6-phosphate aminotransferase [isomerizing] (600 aa).

Cys2 functions as the Nucleophile; for GATase activity in the catalytic mechanism. Residues 2–217 (CGIVGFIGEQ…DKEIVIVTKE (216 aa)) enclose the Glutamine amidotransferase type-2 domain. 2 SIS domains span residues 283-422 (IRNA…AKGE) and 452-590 (LAKQ…VDKP). Lys595 (for Fru-6P isomerization activity) is an active-site residue.

Homodimer.

It localises to the cytoplasm. It carries out the reaction D-fructose 6-phosphate + L-glutamine = D-glucosamine 6-phosphate + L-glutamate. Functionally, catalyzes the first step in hexosamine metabolism, converting fructose-6P into glucosamine-6P using glutamine as a nitrogen source. This Bacillus cereus (strain ATCC 14579 / DSM 31 / CCUG 7414 / JCM 2152 / NBRC 15305 / NCIMB 9373 / NCTC 2599 / NRRL B-3711) protein is Glutamine--fructose-6-phosphate aminotransferase [isomerizing].